Here is a 384-residue protein sequence, read N- to C-terminus: V-type proton ATPase subunit C 2 (384 aa).

This sequence belongs to the V-ATPase C subunit family. In terms of assembly, V-ATPase is a heteromultimeric enzyme made up of two complexes: the ATP-hydrolytic V1 complex and the proton translocation V0 complex. The V1 complex consists of three catalytic AB heterodimers that form a heterohexamer, three peripheral stalks each consisting of EG heterodimers, one central rotor including subunits D and F, and the regulatory subunits C and H. The proton translocation complex V0 consists of the proton transport subunit a, a ring of proteolipid subunits c9c'', rotary subunit d, subunits e and f, and the accessory subunits vah-19/Ac45 and vah-20/PRR.

In terms of biological role, subunit of the V1 complex of vacuolar(H+)-ATPase (V-ATPase), a multisubunit enzyme composed of a peripheral complex (V1) that hydrolyzes ATP and a membrane integral complex (V0) that translocates protons. V-ATPase is responsible for acidifying and maintaining the pH of intracellular compartments and in some cell types, is targeted to the plasma membrane, where it is responsible for acidifying the extracellular environment. Subunit C is necessary for the assembly of the catalytic sector of the enzyme and is likely to have a specific function in its catalytic activity. The protein is V-type proton ATPase subunit C 2 (VATC) of Ascidia sydneiensis samea (Vanadium-rich ascidian).